A 371-amino-acid chain; its full sequence is 4-hydroxy-3-methylbut-2-en-1-yl diphosphate synthase (flavodoxin) (371 aa).

[4Fe-4S] cluster is bound by residues Cys270, Cys273, Cys305, and Glu312.

Belongs to the IspG family. [4Fe-4S] cluster is required as a cofactor.

The catalysed reaction is (2E)-4-hydroxy-3-methylbut-2-enyl diphosphate + oxidized [flavodoxin] + H2O + 2 H(+) = 2-C-methyl-D-erythritol 2,4-cyclic diphosphate + reduced [flavodoxin]. Its pathway is isoprenoid biosynthesis; isopentenyl diphosphate biosynthesis via DXP pathway; isopentenyl diphosphate from 1-deoxy-D-xylulose 5-phosphate: step 5/6. Its function is as follows. Converts 2C-methyl-D-erythritol 2,4-cyclodiphosphate (ME-2,4cPP) into 1-hydroxy-2-methyl-2-(E)-butenyl 4-diphosphate. This is 4-hydroxy-3-methylbut-2-en-1-yl diphosphate synthase (flavodoxin) from Shewanella baltica (strain OS223).